Consider the following 422-residue polypeptide: Receptor homology region, transmembrane domain- and RING domain-containing protein 3 (422 aa).

A signal peptide spans 1 to 22 (MNLVVLLILTLLLFIVSYVVDA). Over 23–168 (GQVILVDSNI…NTEDSVWSLY (146 aa)) the chain is Lumenal. The N-linked (GlcNAc...) asparagine glycan is linked to N31. An intrachain disulfide couples C64 to C89. The region spanning 81 to 146 (LVLIIRGGCS…RAGEMLKKYA (66 aa)) is the PA domain. Residues 169–189 (ASIALILSLAIFCVMVTCVFF) form a helical membrane-spanning segment. Residues 190-422 (YRYCSTIRNS…HFASAHSLPD (233 aa)) lie on the Cytoplasmic side of the membrane. The segment at 232–274 (CAICLEDYIVGDKLRVLPCSHKFHVACVDSWLISWRTFCPVCK) adopts an RING-type; atypical zinc-finger fold. Residues 344–368 (LRRQASPLQSSSQRSHLSMKSSHSL) are disordered. Over residues 349–368 (SPLQSSSQRSHLSMKSSHSL) the composition is skewed to polar residues.

The protein resides in the prevacuolar compartment membrane. It localises to the protein storage vacuole membrane. Its function is as follows. Involved in the trafficking of vacuolar proteins. May function as a sorting receptor for protein trafficking to the protein storage vacuole (PSV). The chain is Receptor homology region, transmembrane domain- and RING domain-containing protein 3 (RMR3) from Arabidopsis thaliana (Mouse-ear cress).